The chain runs to 377 residues: Aspartate aminotransferase (377 aa).

L-aspartate is bound by residues G37, W123, and N173. K234 carries the N6-(pyridoxal phosphate)lysine modification. L-aspartate is bound at residue R353.

The protein belongs to the class-I pyridoxal-phosphate-dependent aminotransferase family. In terms of assembly, homodimer. Pyridoxal 5'-phosphate serves as cofactor.

Its subcellular location is the cytoplasm. The catalysed reaction is L-aspartate + 2-oxoglutarate = oxaloacetate + L-glutamate. The protein is Aspartate aminotransferase (aspC) of Thermotoga maritima (strain ATCC 43589 / DSM 3109 / JCM 10099 / NBRC 100826 / MSB8).